The following is a 516-amino-acid chain: Lysine--tRNA ligase (516 aa).

Positions 1 to 23 (MTEPNRAQAAPASPTAELPAADE) are disordered. Mg(2+) is bound by residues E426 and E433.

It belongs to the class-II aminoacyl-tRNA synthetase family. Homodimer. Mg(2+) serves as cofactor.

It localises to the cytoplasm. The enzyme catalyses tRNA(Lys) + L-lysine + ATP = L-lysyl-tRNA(Lys) + AMP + diphosphate. This chain is Lysine--tRNA ligase, found in Cupriavidus pinatubonensis (strain JMP 134 / LMG 1197) (Cupriavidus necator (strain JMP 134)).